The following is a 224-amino-acid chain: Ribose-5-phosphate isomerase A (224 aa).

Substrate-binding positions include 26–29 (TGST), 81–84 (DGAD), and 94–97 (KGGG). The active-site Proton acceptor is the Glu103. A substrate-binding site is contributed by Lys121.

It belongs to the ribose 5-phosphate isomerase family. As to quaternary structure, homodimer.

The enzyme catalyses aldehydo-D-ribose 5-phosphate = D-ribulose 5-phosphate. It participates in carbohydrate degradation; pentose phosphate pathway; D-ribose 5-phosphate from D-ribulose 5-phosphate (non-oxidative stage): step 1/1. Functionally, catalyzes the reversible conversion of ribose-5-phosphate to ribulose 5-phosphate. This Listeria innocua serovar 6a (strain ATCC BAA-680 / CLIP 11262) protein is Ribose-5-phosphate isomerase A.